The chain runs to 815 residues: (-)-kolavenyl diphosphate synthase TPS10, chloroplastic (815 aa).

The N-terminal 50 residues, methionine 1–serine 50, are a transit peptide targeting the chloroplast. Lysine 247 is a substrate binding site. 2 residues coordinate Mg(2+): aspartate 379 and aspartate 381. A DXDD motif motif is present at residues aspartate 379–aspartate 382. Lysine 465 lines the substrate pocket.

The protein belongs to the terpene synthase family. Tpsc subfamily. Mg(2+) is required as a cofactor.

Its subcellular location is the plastid. The protein resides in the chloroplast. The catalysed reaction is (2E,6E,10E)-geranylgeranyl diphosphate = (-)-kolavenyl diphosphate. Its activity is regulated as follows. Inhibited by high concentrations of magnesium. In terms of biological role, diterpene synthase that catalyzes the formation of (-)-kolavenyl diphosphate from geranylgeranyl diphosphate (GGPP). This chain is (-)-kolavenyl diphosphate synthase TPS10, chloroplastic, found in Tripterygium wilfordii (Thunder God vine).